A 478-amino-acid chain; its full sequence is Centromere DNA-binding protein complex CBF3 subunit C (478 aa).

Residues 206 to 251 (EVGEEKDVDVSGANSDENSSPSSTIKNKKRSASKRSHSDNGNVGAT) form a disordered region. Residues 217–230 (GANSDENSSPSSTI) are compositionally biased toward polar residues. A compositionally biased stretch (basic residues) spans 231 to 240 (KNKKRSASKR).

As to quaternary structure, component of the CBF3 copmplex, which is formed of CBF3A/CBF2, CBF3B/CEP3, CBF3C/CTF13 and CBF3D. CBF3C interacts with CBF3D and SGT1.

The protein localises to the nucleus. The protein resides in the chromosome. Its subcellular location is the centromere. Its function is as follows. Acts as a central component of the centromere DNA-binding protein complex CBF3, which is essential for chromosome segregation and movement of centromeres along microtubules. CBF3 is required for the recruitment of other kinetochore complexes to CEN DNA. It plays a role in the attachment of chromosomes to the spindle and binds selectively to a highly conserved DNA sequence called CDEIII, found in centromers and in several promoters. The association of CBF3C with CBF3D and SGT1 is required for CBF3C activation and CBF3 assembly. The polypeptide is Centromere DNA-binding protein complex CBF3 subunit C (CTF13) (Saccharomyces cerevisiae (strain ATCC 204508 / S288c) (Baker's yeast)).